A 57-amino-acid chain; its full sequence is Large ribosomal subunit protein bL32 (57 aa).

Belongs to the bacterial ribosomal protein bL32 family.

The sequence is that of Large ribosomal subunit protein bL32 from Ureaplasma parvum serovar 3 (strain ATCC 27815 / 27 / NCTC 11736).